Reading from the N-terminus, the 587-residue chain is Lamin-B1 (587 aa).

Over residues M1 to A11 the composition is skewed to polar residues. The interval M1–R29 is disordered. At A2 the chain carries N-acetylalanine. Residues A2–E34 form a head region. T3 and T5 each carry phosphothreonine. R14 is subject to Omega-N-methylarginine. Position 16 is a phosphoserine (S16). T20 carries the phosphothreonine modification. S23 is modified (phosphoserine). T25 is modified (phosphothreonine). S28 carries the post-translational modification Phosphoserine. One can recognise an IF rod domain in the interval E32–L388. The coil 1A stretch occupies residues E35–E69. A linker 1 region spans residues V70–L81. Residues Y82 to E215 are coil 1B. Residue K102 forms a Glycyl lysine isopeptide (Lys-Gly) (interchain with G-Cter in SUMO2) linkage. K111 is subject to N6-acetyllysine. Residue K123 forms a Glycyl lysine isopeptide (Lys-Gly) (interchain with G-Cter in SUMO2) linkage. S126 carries the phosphoserine modification. A Glycyl lysine isopeptide (Lys-Gly) (interchain with G-Cter in SUMO2) cross-link involves residue K145. Residue K157 is modified to N6-acetyllysine; alternate. Residue K157 forms a Glycyl lysine isopeptide (Lys-Gly) (interchain with G-Cter in SUMO2); alternate linkage. The residue at position 158 (S158) is a Phosphoserine. Residue K181 forms a Glycyl lysine isopeptide (Lys-Gly) (interchain with G-Cter in SUMO2) linkage. A phosphoserine mark is found at S200 and S232. The segment at I216–A243 is linker 2. Glycyl lysine isopeptide (Lys-Gly) (interchain with G-Cter in SUMO2) cross-links involve residues K241 and K261. The segment at Q244–E386 is coil 2. The residue at position 271 (K271) is an N6-acetyllysine; alternate. A Glycyl lysine isopeptide (Lys-Gly) (interchain with G-Cter in SUMO2); alternate cross-link involves residue K271. S278 and S302 each carry phosphoserine. K312 participates in a covalent cross-link: Glycyl lysine isopeptide (Lys-Gly) (interchain with G-Cter in SUMO2). K330 is modified (N6-acetyllysine; alternate). A Glycyl lysine isopeptide (Lys-Gly) (interchain with G-Cter in SUMO2); alternate cross-link involves residue K330. 2 positions are modified to phosphoserine: S375 and S393. The tail stretch occupies residues R387–M587. The segment covering L390–V409 has biased composition (low complexity). Residues L390–I432 are disordered. An O-linked (GlcNAc) threonine glycan is attached at T399. R413 bears the Omega-N-methylarginine mark. The Nuclear localization signal motif lies at K415–D420. Residues V430–F546 enclose the LTD domain. K483 carries the N6-acetyllysine modification. Residue K532 forms a Glycyl lysine isopeptide (Lys-Gly) (interchain with G-Cter in SUMO2) linkage. S534 carries the post-translational modification Phosphoserine. Residue K547 forms a Glycyl lysine isopeptide (Lys-Gly) (interchain with G-Cter in SUMO2) linkage. Positions I550–M587 are disordered. The span at P551–P561 shows a compositional bias: acidic residues. A compositionally biased stretch (polar residues) spans Q573–M587. The residue at position 576 (T576) is a Phosphothreonine. C584 carries the cysteine methyl ester modification. Residue C584 is the site of S-farnesyl cysteine attachment. Residues A585–M587 constitute a propeptide, removed in mature form.

The protein belongs to the intermediate filament family. As to quaternary structure, homodimer. Lamin dimers then assemble into dimeric head-to-tail polymers. Ultimately, two head-to-tail polymers assemble laterally into a protofilament with a uniformly shaped rod of 3.5 nm in diameter. Interacts with SPAG4 and SEPT12. Post-translationally, B-type lamins undergo a series of modifications, such as farnesylation and phosphorylation. Increased phosphorylation of the lamins occurs before envelope disintegration and probably plays a role in regulating lamin associations. Phosphorylation plays a key role in lamin organization, subcellular localization and nuclear envelope disintegration. Phosphorylation by CDK1 at Ser-23 and Ser-393 at the onset of mitosis drives lamin disassembly and nuclear envelope breakdown.

The protein localises to the nucleus lamina. Functionally, lamins are intermediate filament proteins that assemble into a filamentous meshwork, and which constitute the major components of the nuclear lamina, a fibrous layer on the nucleoplasmic side of the inner nuclear membrane. Lamins provide a framework for the nuclear envelope, bridging the nuclear envelope and chromatin, thereby playing an important role in nuclear assembly, chromatin organization, nuclear membrane and telomere dynamics. The structural integrity of the lamina is strictly controlled by the cell cycle, as seen by the disintegration and formation of the nuclear envelope in prophase and telophase, respectively. The polypeptide is Lamin-B1 (Lmnb1) (Rattus norvegicus (Rat)).